A 1312-amino-acid polypeptide reads, in one-letter code: Beta-N-acetylhexosaminidase (1312 aa).

The N-terminal stretch at 1–33 (MKHEKQQRFSIRKYAVGAASVLIGFAFQAQTVA) is a signal peptide. Over residues 38-59 (TPTTTENQPTIHTVSDSPQSSE) the composition is skewed to polar residues. Positions 38–178 (TPTTTENQPT…ATEAGKERAA (141 aa)) are disordered. The segment covering 118–177 (AEKETANKKAEEASPKKEEAKEVDSKESNTDKTDKDKPAKKDEAKAEADKPATEAGKERA) has biased composition (basic and acidic residues). Catalytic domain stretches follow at residues 176–616 (RAAT…TPEA) and 621–1046 (EAKR…PAVT). G5 domains lie at 1059–1138 (NVET…GAPV) and 1150–1230 (TTEV…GTMV). The tract at residues 1244-1290 (EEKPKLEIPSQPAPSTAPAEESKVLPQDPAPVVTEKKLPETGTHDSA) is disordered. Residues 1277 to 1286 (TEKKLPETGT) are compositionally biased toward basic and acidic residues. The LPXTG sorting signal signature appears at 1281–1285 (LPETG). A Pentaglycyl murein peptidoglycan amidated threonine modification is found at T1284. Residues 1285 to 1312 (GTHDSAGLVVAGLMSTLAAYGLTKRKED) constitute a propeptide, removed by sortase.

The protein belongs to the glycosyl hydrolase 20 family.

It is found in the secreted. The protein resides in the cell wall. The catalysed reaction is Hydrolysis of terminal non-reducing N-acetyl-D-hexosamine residues in N-acetyl-beta-D-hexosaminides.. This is Beta-N-acetylhexosaminidase (strH) from Streptococcus pneumoniae serotype 4 (strain ATCC BAA-334 / TIGR4).